The primary structure comprises 93 residues: Large ribosomal subunit protein uL23cz/uL23cy (93 aa).

It belongs to the universal ribosomal protein uL23 family. In terms of assembly, part of the 50S ribosomal subunit.

It localises to the plastid. The protein localises to the chloroplast. Functionally, binds to 23S rRNA. This chain is Large ribosomal subunit protein uL23cz/uL23cy (rpl23-A), found in Platanus occidentalis (Sycamore).